Reading from the N-terminus, the 339-residue chain is MSDALKPLIGAAADRALSRAEAEDAFRILFEGEATPSQIGGFLMALRTRGETVAEYAAAASVMRAKCNAVKAPAGAMDIVGTGGDGKGTLNISTATAFVVAGAGVVVAKHGNRNLSSKSGAADALSQMGLNVMVGPEVVERALAEAGIGFMMAPMHHPAIAHVMPTRAELGTRTIFNILGPLTNPAGVKRQLTGAFSRDLIRPMAQTLGALGSEKAWLVHGSDGTDELTITGVSWVAALGPDGSVTDMEIHPEDAGLPVHPFEAIVGGTPAQNAADFKALLAGEASAYRDAVLLNAAAALVVADAASTLQDGVEMAATSIDSGAAARKIEAVAQITQAT.

5-phospho-alpha-D-ribose 1-diphosphate-binding positions include Gly-81, 84–85, Thr-89, 91–94, 109–117, and Ala-121; these read GD, NIST, and KHGNRNLSS. Residue Gly-81 participates in anthranilate binding. Ser-93 is a Mg(2+) binding site. Residue Asn-112 coordinates anthranilate. Arg-167 serves as a coordination point for anthranilate. Mg(2+) contacts are provided by Asp-226 and Glu-227.

It belongs to the anthranilate phosphoribosyltransferase family. Homodimer. Mg(2+) is required as a cofactor.

It catalyses the reaction N-(5-phospho-beta-D-ribosyl)anthranilate + diphosphate = 5-phospho-alpha-D-ribose 1-diphosphate + anthranilate. Its pathway is amino-acid biosynthesis; L-tryptophan biosynthesis; L-tryptophan from chorismate: step 2/5. In terms of biological role, catalyzes the transfer of the phosphoribosyl group of 5-phosphorylribose-1-pyrophosphate (PRPP) to anthranilate to yield N-(5'-phosphoribosyl)-anthranilate (PRA). In Roseobacter denitrificans (strain ATCC 33942 / OCh 114) (Erythrobacter sp. (strain OCh 114)), this protein is Anthranilate phosphoribosyltransferase.